Here is a 339-residue protein sequence, read N- to C-terminus: Large ribosomal subunit protein uL29 (339 aa).

Residues 1-96 (MNDLTKKSVE…FAKQRKAKIE (96 aa)) form a large ribosomal subunit protein uL29 region. A unknown region spans residues 97–339 (QMMAEQQAAE…KTTKKGTGKK (243 aa)). Disordered regions lie at residues 129-254 (VVST…VPTK) and 311-339 (KENR…TGKK). The span at 145–156 (APVAAKKPAAAK) shows a compositional bias: low complexity. Positions 157-170 (DFPKQKDVVEEKTA) are enriched in basic and acidic residues. The span at 171–182 (TGKPAAPSAKKA) shows a compositional bias: low complexity. Basic and acidic residues predominate over residues 185–210 (AKKDVAQETKTDKDAALKALIKEKAA). Over residues 217 to 238 (KSKTSTPSGKTTVTVKSVTSAK) the composition is skewed to low complexity. The span at 239–248 (ADIEVPKETS) shows a compositional bias: basic and acidic residues.

The protein belongs to the universal ribosomal protein uL29 family. As to quaternary structure, forms homomultimers. Part of the ribosome; radioactive IRS binds to purified ribosomes.

Functionally, specifically binds a DNA inverted repeat sequence (IRS) found downstream of rpsB in one of the ribosomal subunit operons (for genes rpsB, tsf, and unknown gene x). Might be involved in regulation of transcription of the rpsB operon; the IRS may be a control element to attenuate transcription. In Spiroplasma citri, this protein is Large ribosomal subunit protein uL29.